The primary structure comprises 597 residues: Tubulin polyglutamylase ttll-4 (597 aa).

A compositionally biased stretch (polar residues) spans 1–18 (MSSGYSSAPSVSHTSSEA). 2 disordered regions span residues 1 to 39 (MSSGYSSAPSVSHTSSEADLNRIESYEDGVDEEASDEQR) and 80 to 107 (SKSKKKKQCPPNITIEKKNGNSSPFLKS). A compositionally biased stretch (acidic residues) spans 26-35 (YEDGVDEEAS). A TTL domain is found at 134-472 (QSRLTWCHNS…HVPPSFDKLH (339 aa)). Residues Lys250, 256–257 (RG), 278–281 (QHYI), and 291–293 (KFD) each bind ATP. Arg256 contacts a protein. Residue Arg317 coordinates L-glutamate. 338 to 339 (TN) lines the ATP pocket. Residues Tyr340, Ser341, and Lys358 each contribute to the L-glutamate site. Asp418, Glu431, and Asn433 together coordinate Mg(2+). Position 449 (Lys449) interacts with L-glutamate.

It belongs to the tubulin--tyrosine ligase family. Requires Mg(2+) as cofactor.

The catalysed reaction is L-glutamyl-[protein] + L-glutamate + ATP = gamma-L-glutamyl-L-glutamyl-[protein] + ADP + phosphate + H(+). Monoglutamylase which modifies tubulin, adding a single glutamate on the gamma-carboxyl group of specific glutamate residues of target proteins. Involved in the side-chain initiation step of the polyglutamylation reaction but not in the elongation step. Preferentially modifies beta-tail tubulin over the alpha-tubulin. Involved in side-chain glutamylation of tubulin in sensory cilia. Together with ttll-5 and ttll-11, required for male mating. This chain is Tubulin polyglutamylase ttll-4 (ttll-4), found in Caenorhabditis briggsae.